A 396-amino-acid chain; its full sequence is S100P-binding protein (396 aa).

The interval 145-249 (CDPVLDKDKI…RKNSGSHKSG (105 aa)) is disordered. Composition is skewed to basic and acidic residues over residues 148–161 (VLDKDKIDSSKETE) and 168–185 (EQTREDDPQPNESKRCTE). Polar residues-rich tracts occupy residues 202 to 215 (SSPSNNNIEQTASD) and 227 to 246 (VFSQISNHSEVPNRKNSGSH).

Interacts with S100P.

Its subcellular location is the nucleus. This is S100P-binding protein from Mus musculus (Mouse).